Reading from the N-terminus, the 197-residue chain is Holliday junction branch migration complex subunit RuvA (197 aa).

A domain I region spans residues 1 to 65 (MISQVRGTIM…EDAWHLYGFA (65 aa)). Positions 66-140 (HAYERAVFQK…DKIDAVGPAP (75 aa)) are domain II. Residues 140-144 (PATGT) form a flexible linker region. The domain III stretch occupies residues 145-197 (APSPLGDDAVRALIALGYNQTEADRAVRAVVESGAPKDVSSLVRGALSRLTAK).

The protein belongs to the RuvA family. As to quaternary structure, homotetramer. Forms an RuvA(8)-RuvB(12)-Holliday junction (HJ) complex. HJ DNA is sandwiched between 2 RuvA tetramers; dsDNA enters through RuvA and exits via RuvB. An RuvB hexamer assembles on each DNA strand where it exits the tetramer. Each RuvB hexamer is contacted by two RuvA subunits (via domain III) on 2 adjacent RuvB subunits; this complex drives branch migration. In the full resolvosome a probable DNA-RuvA(4)-RuvB(12)-RuvC(2) complex forms which resolves the HJ.

Its subcellular location is the cytoplasm. The RuvA-RuvB-RuvC complex processes Holliday junction (HJ) DNA during genetic recombination and DNA repair, while the RuvA-RuvB complex plays an important role in the rescue of blocked DNA replication forks via replication fork reversal (RFR). RuvA specifically binds to HJ cruciform DNA, conferring on it an open structure. The RuvB hexamer acts as an ATP-dependent pump, pulling dsDNA into and through the RuvAB complex. HJ branch migration allows RuvC to scan DNA until it finds its consensus sequence, where it cleaves and resolves the cruciform DNA. This chain is Holliday junction branch migration complex subunit RuvA, found in Gemmatimonas aurantiaca (strain DSM 14586 / JCM 11422 / NBRC 100505 / T-27).